The sequence spans 250 residues: Acetylglutamate kinase (250 aa).

Substrate contacts are provided by residues 41-42, Arg63, and Asn156; that span reads GG.

This sequence belongs to the acetylglutamate kinase family. ArgB subfamily.

Its subcellular location is the cytoplasm. It carries out the reaction N-acetyl-L-glutamate + ATP = N-acetyl-L-glutamyl 5-phosphate + ADP. The protein operates within amino-acid biosynthesis; L-arginine biosynthesis; N(2)-acetyl-L-ornithine from L-glutamate: step 2/4. In terms of biological role, catalyzes the ATP-dependent phosphorylation of N-acetyl-L-glutamate. In Listeria monocytogenes serotype 4a (strain HCC23), this protein is Acetylglutamate kinase.